Reading from the N-terminus, the 96-residue chain is Small ribosomal subunit protein bS6 (96 aa).

Belongs to the bacterial ribosomal protein bS6 family.

Its function is as follows. Binds together with bS18 to 16S ribosomal RNA. The protein is Small ribosomal subunit protein bS6 of Bacillus cereus (strain ATCC 10987 / NRS 248).